Here is a 227-residue protein sequence, read N- to C-terminus: Ribose-5-phosphate isomerase A (227 aa).

Residues 26–29 (TGST), 82–85 (DGAD), and 95–98 (KGGG) each bind substrate. The active-site Proton acceptor is the E104. K122 is a binding site for substrate.

This sequence belongs to the ribose 5-phosphate isomerase family. Homodimer.

The catalysed reaction is aldehydo-D-ribose 5-phosphate = D-ribulose 5-phosphate. Its pathway is carbohydrate degradation; pentose phosphate pathway; D-ribose 5-phosphate from D-ribulose 5-phosphate (non-oxidative stage): step 1/1. Functionally, catalyzes the reversible conversion of ribose-5-phosphate to ribulose 5-phosphate. This Streptococcus pyogenes serotype M2 (strain MGAS10270) protein is Ribose-5-phosphate isomerase A.